A 170-amino-acid chain; its full sequence is Dual-action ribosomal maturation protein DarP (170 aa).

It belongs to the DarP family.

The protein localises to the cytoplasm. In terms of biological role, member of a network of 50S ribosomal subunit biogenesis factors which assembles along the 30S-50S interface, preventing incorrect 23S rRNA structures from forming. Promotes peptidyl transferase center (PTC) maturation. The protein is Dual-action ribosomal maturation protein DarP of Neisseria meningitidis serogroup A / serotype 4A (strain DSM 15465 / Z2491).